A 419-amino-acid polypeptide reads, in one-letter code: MSTLEEVLSEAYKLVIPSEEEEKRIREVTQKVKRLVSQIIEEGGIDALVDVYGSGARGTWLPGQRDIDIFVVLNDRRIKPEDVVKILTSRFTTLGLNWALRYAQHPYVSLQVDDYEVDIVPCYKIQPGERPITAADRSPLHHKFLSERLKKDQILDVRLLKLFLKTIGVYGAEIKTEGFSGYLTELLVVYYGSFIEVLRAASRWRPYKTYITFVETSAKFKSPLVVVDPVDPNRNAAAAVSLTSMSTLILAARRFLKKPSLSYFQPSRGYAIRQVETVEVVYPYPGEPPDIVWGKYKRIGRNLFKWLRECGFKVFRWGVESDEKTYVKLVYVVEQTKLAPYTLHKGPPVYDDAVDAFIEKYVNEEVIGPFVVGARAYVIKKRKWTDISHCINAKLGKGNYDIRVNLYDGDLVRKTPWLT.

ATP-binding residues include Ser-54 and Arg-57. 2 residues coordinate CTP: Ser-54 and Arg-57. The Mg(2+) site is built by Asp-66, Asp-68, and Asp-118. ATP contacts are provided by His-141, Lys-161, and Tyr-170. Residues His-141, Lys-161, and Tyr-170 each contribute to the CTP site.

This sequence belongs to the tRNA nucleotidyltransferase/poly(A) polymerase family. Archaeal CCA-adding enzyme subfamily. In terms of assembly, homodimer. Requires Mg(2+) as cofactor.

It catalyses the reaction a tRNA precursor + 2 CTP + ATP = a tRNA with a 3' CCA end + 3 diphosphate. The enzyme catalyses a tRNA with a 3' CCA end + 2 CTP + ATP = a tRNA with a 3' CCACCA end + 3 diphosphate. Functionally, catalyzes the addition and repair of the essential 3'-terminal CCA sequence in tRNAs without using a nucleic acid template. Adds these three nucleotides in the order of C, C, and A to the tRNA nucleotide-73, using CTP and ATP as substrates and producing inorganic pyrophosphate. tRNA 3'-terminal CCA addition is required both for tRNA processing and repair. Also involved in tRNA surveillance by mediating tandem CCA addition to generate a CCACCA at the 3' terminus of unstable tRNAs. While stable tRNAs receive only 3'-terminal CCA, unstable tRNAs are marked with CCACCA and rapidly degraded. This Pyrobaculum aerophilum (strain ATCC 51768 / DSM 7523 / JCM 9630 / CIP 104966 / NBRC 100827 / IM2) protein is CCA-adding enzyme.